The sequence spans 314 residues: Lipoyl synthase (314 aa).

Positions 61, 66, 72, 87, 91, 94, and 301 each coordinate [4Fe-4S] cluster. The 218-residue stretch at 73–290 folds into the Radical SAM core domain; sequence FGRGTATFMI…EEEAKKMGFS (218 aa).

The protein belongs to the radical SAM superfamily. Lipoyl synthase family. The cofactor is [4Fe-4S] cluster.

It is found in the cytoplasm. The catalysed reaction is [[Fe-S] cluster scaffold protein carrying a second [4Fe-4S](2+) cluster] + N(6)-octanoyl-L-lysyl-[protein] + 2 oxidized [2Fe-2S]-[ferredoxin] + 2 S-adenosyl-L-methionine + 4 H(+) = [[Fe-S] cluster scaffold protein] + N(6)-[(R)-dihydrolipoyl]-L-lysyl-[protein] + 4 Fe(3+) + 2 hydrogen sulfide + 2 5'-deoxyadenosine + 2 L-methionine + 2 reduced [2Fe-2S]-[ferredoxin]. It participates in protein modification; protein lipoylation via endogenous pathway; protein N(6)-(lipoyl)lysine from octanoyl-[acyl-carrier-protein]: step 2/2. In terms of biological role, catalyzes the radical-mediated insertion of two sulfur atoms into the C-6 and C-8 positions of the octanoyl moiety bound to the lipoyl domains of lipoate-dependent enzymes, thereby converting the octanoylated domains into lipoylated derivatives. The polypeptide is Lipoyl synthase (Dechloromonas aromatica (strain RCB)).